Consider the following 77-residue polypeptide: NAD(P)H-quinone oxidoreductase subunit L (77 aa).

The next 2 membrane-spanning stretches (helical) occupy residues 12 to 32 (FVAY…ILFY) and 47 to 67 (LGVY…SPFL).

The protein belongs to the complex I NdhL subunit family. As to quaternary structure, NDH-1 can be composed of about 15 different subunits; different subcomplexes with different compositions have been identified which probably have different functions.

It localises to the cellular thylakoid membrane. It catalyses the reaction a plastoquinone + NADH + (n+1) H(+)(in) = a plastoquinol + NAD(+) + n H(+)(out). The catalysed reaction is a plastoquinone + NADPH + (n+1) H(+)(in) = a plastoquinol + NADP(+) + n H(+)(out). NDH-1 shuttles electrons from an unknown electron donor, via FMN and iron-sulfur (Fe-S) centers, to quinones in the respiratory and/or the photosynthetic chain. The immediate electron acceptor for the enzyme in this species is believed to be plastoquinone. Couples the redox reaction to proton translocation, and thus conserves the redox energy in a proton gradient. Cyanobacterial NDH-1 also plays a role in inorganic carbon-concentration. The sequence is that of NAD(P)H-quinone oxidoreductase subunit L from Prochlorococcus marinus (strain MIT 9515).